Here is a 263-residue protein sequence, read N- to C-terminus: Hydroxyethylthiazole kinase (263 aa).

Residue Met-39 participates in substrate binding. Lys-115 and Thr-160 together coordinate ATP. Gly-187 serves as a coordination point for substrate.

Belongs to the Thz kinase family. Requires Mg(2+) as cofactor.

The enzyme catalyses 5-(2-hydroxyethyl)-4-methylthiazole + ATP = 4-methyl-5-(2-phosphooxyethyl)-thiazole + ADP + H(+). It functions in the pathway cofactor biosynthesis; thiamine diphosphate biosynthesis; 4-methyl-5-(2-phosphoethyl)-thiazole from 5-(2-hydroxyethyl)-4-methylthiazole: step 1/1. In terms of biological role, catalyzes the phosphorylation of the hydroxyl group of 4-methyl-5-beta-hydroxyethylthiazole (THZ). The sequence is that of Hydroxyethylthiazole kinase from Staphylococcus aureus (strain JH9).